The sequence spans 70 residues: Cold shock-like protein CspJ (70 aa).

The region spanning 7–67 (GLVKWFNPEK…GPKGPSAVNV (61 aa)) is the CSD domain.

The protein localises to the cytoplasm. This is Cold shock-like protein CspJ (cspJ) from Salmonella typhi.